The primary structure comprises 307 residues: Ribonuclease Z (307 aa).

The Zn(2+) site is built by histidine 63, histidine 65, aspartate 67, histidine 68, histidine 140, aspartate 211, and histidine 269. Aspartate 67 serves as the catalytic Proton acceptor.

Belongs to the RNase Z family. As to quaternary structure, homodimer. The cofactor is Zn(2+).

It carries out the reaction Endonucleolytic cleavage of RNA, removing extra 3' nucleotides from tRNA precursor, generating 3' termini of tRNAs. A 3'-hydroxy group is left at the tRNA terminus and a 5'-phosphoryl group is left at the trailer molecule.. Its function is as follows. Zinc phosphodiesterase, which displays some tRNA 3'-processing endonuclease activity. Probably involved in tRNA maturation, by removing a 3'-trailer from precursor tRNA. This Bacillus subtilis (strain 168) protein is Ribonuclease Z.